Reading from the N-terminus, the 158-residue chain is C-type lectin lectoxin-Enh5 (158 aa).

A signal peptide spans 1 to 23 (MGQFTVVSLGLLAVFLSLSGAKG). 3 disulfide bridges follow: cysteine 26–cysteine 37, cysteine 54–cysteine 154, and cysteine 129–cysteine 146. Residues 33–155 (RNGVCNKLFP…CASLHPFICQ (123 aa)) form the C-type lectin domain. The short motif at 119-121 (EPN) is the Mannose-binding element. Ca(2+) is bound by residues glutamate 127, asparagine 142, and aspartate 143.

It belongs to the true venom lectin family. Expressed by the venom gland.

It is found in the secreted. Its function is as follows. Mannose-binding lectin which recognizes specific carbohydrate structures and agglutinates a variety of animal cells by binding to cell-surface glycoproteins and glycolipids. May be a calcium-dependent lectin. The sequence is that of C-type lectin lectoxin-Enh5 from Pseudoferania polylepis (Macleay's water snake).